The primary structure comprises 724 residues: MAERRLVAVLGQVQTYVFQLEMLKRCDPAVVRELAPRVKLNALMCRYLARRLPLEAQTTPLTCALRLALAYARAEGDRVLGALAAAGDDAEAYFERTMGGACRFHARVALDTYGGRVETELQFLHDAENLLKQLNYCHLITPHAVDLSAVDEFLARTIGGGLVVPPELYDPAQPCAVCFEELCVTANQGEATHRRLLGCVCDHLTRQLAVRVDPEDVAKNLPHVHGLDEARRGRALAALAAVDAAEAREAEAASTAAAGAEAGDAGETARRRADALLDAHDVFRPASRRLYAVSELQFWLASTNQAVRALDLFTHNLDDLERRERRAEVRAAAVELALFGRRPEHFDRARAARELDIIDGLLVGGCAASPDERLEALIRACYDHHMSTPMLRMLDPDRANRDALERLLEGGDDADADGGAAGGADAGDGGVGDEDGPGAPPPADAVAWADLPAAALRDAERRRRLYADRLSRRSAASLAQCVREQRRELEKTLRVNVYGDALLHTYVAVAAGFRARRAFCEAAARAGTVVDERETGCFDAHSFMKATVQRHPVDAALLPAVTRKFFELVNGPLFAHDTHAFAQPPNTALYFAVENVGLLPHLKEELARFMVARDWCVSEFRGFYRFQTAGVTATQRQAWRYIRELVLAVAVFRSVFHCGDVEVLRADRFAGRDGLYLTYEASCPLVAVFGAGPGGIGPGTTAVLASDVFGLLHTTLQLRGAPSR.

The segment at 175–203 (CAVCFEELCVTANQGEATHRRLLGCVCDH) adopts a C3H1-type zinc-finger fold. The tract at residues 410–445 (GGDDADADGGAAGGADAGDGGVGDEDGPGAPPPADA) is disordered. Gly residues predominate over residues 419-430 (GAAGGADAGDGG). 652-659 (FRSVFHCG) contributes to the ATP binding site.

It belongs to the herpesviridae TRM1 protein family. As to quaternary structure, associates with TRM2 and TRM3 to form the tripartite terminase complex. Interacts with portal protein.

It localises to the host nucleus. In terms of biological role, component of the molecular motor that translocates viral genomic DNA in empty capsid during DNA packaging. Forms a tripartite terminase complex together with TRM2 and TRM3 in the host cytoplasm. Once the complex reaches the host nucleus, it interacts with the capsid portal vertex. This portal forms a ring in which genomic DNA is translocated into the capsid. TRM1 carries an endonuclease activity that plays an important role for the cleavage of concatemeric viral DNA into unit length genomes. This is Tripartite terminase subunit 1 from Suid herpesvirus 1 (strain Indiana-Funkhauser / Becker) (SuHV-1).